We begin with the raw amino-acid sequence, 307 residues long: Furaquinocin biosynthesis prenyltransferase (307 aa).

Belongs to the aromatic prenyltransferase family. As to quaternary structure, monomer.

It catalyses the reaction 2-O,3-dimethylflaviolin + (2E)-geranyl diphosphate = 6-linalyl-2-O,3-dimethylflaviolin + diphosphate. It carries out the reaction 2-O,3-dimethylflaviolin + (2E)-geranyl diphosphate + H(+) = 7-O-geranyl-2-O,3-dimethylflaviolin + diphosphate. Does not require any metal cations for activity. Involved in the biosynthesis of furaquinocin. Catalyzes the transfer of a geranyl group to 2-methoxy-3-methyl-flaviolin to yield 6-prenyl-2-methoxy-3-methyl-flaviolin and 7-O-geranyl-2-methoxy-3-methyl-flaviolin in a 10:1 ratio. Can also use other substrates such as flaviolin or 1,3-dihydroxy naphthalene, and can also use DMAPP as prenyl donor. This is Furaquinocin biosynthesis prenyltransferase from Streptomyces sp. (strain KO-3988).